Reading from the N-terminus, the 254-residue chain is Ribosomal RNA small subunit methyltransferase G (254 aa).

S-adenosyl-L-methionine is bound by residues glycine 84, phenylalanine 89, 136–137 (VE), and arginine 155. Positions 231 to 254 (HLYPRAVGIPSKQPLGIQADDNRS) are disordered.

The protein belongs to the methyltransferase superfamily. RNA methyltransferase RsmG family.

The protein localises to the cytoplasm. Its function is as follows. Specifically methylates the N7 position of a guanine in 16S rRNA. This chain is Ribosomal RNA small subunit methyltransferase G, found in Synechococcus sp. (strain WH7803).